A 606-amino-acid polypeptide reads, in one-letter code: Atypical protein kinase C (606 aa).

The 84-residue stretch at 30-113 folds into the PB1 domain; sequence SITVKTAYNG…SQLVIHVFPN (84 aa). Residues 145–195 form a Phorbol-ester/DAG-type zinc finger; sequence GHIFQAKRFNRRAFCAYCQDRIWGLGRQGFKCIQCKLLVHKKCHKLVQKHC. Positions 264 to 532 constitute a Protein kinase domain; the sequence is FELIRVIGRG…FMDIVSHPFF (269 aa). ATP is bound by residues 270–278 and Lys-293; that span reads IGRGSYAKV. Asp-388 (proton acceptor) is an active-site residue. The AGC-kinase C-terminal domain occupies 533 to 604; sequence KNMDWELLER…VNPLLMSLED (72 aa).

The protein belongs to the protein kinase superfamily. AGC Ser/Thr protein kinase family. PKC subfamily. Interacts with baz; the interaction is required for apical localization of aPKC in neuroblasts and epithelial cells. Interacts with Dap160; the interaction promotes aPKC apical localization and kinase activity. Interacts with and phosphorylates l(2)gl and yrt. Interacts with crb and ref(2)P. Forms a complex with baz, fz and Patj. In terms of tissue distribution, expressed in the testis. In spermatid cysts, localizes near the tips of spermatid flagellar axonemes (at protein level). Detectable in freshly laid eggs before onset of zygotic transcription so is deposited in the egg during oogenesis. At the cellular blastoderm stage, present in all cells except the pole cells. During gastrulation, strongly expressed in tissues undergoing morphogenetic movements such as invaginating mesoderm, proctodeum and cephalic furrow. Strongly expressed in neuroblasts.

It is found in the cytoplasm. The protein localises to the cell cortex. Its subcellular location is the apicolateral cell membrane. The enzyme catalyses L-seryl-[protein] + ATP = O-phospho-L-seryl-[protein] + ADP + H(+). The catalysed reaction is L-threonyl-[protein] + ATP = O-phospho-L-threonyl-[protein] + ADP + H(+). Its function is as follows. Serine/threonine protein kinase which is required for apico-basal cell polarity in the germ line as well as in epithelial and neural precursor cells, for epithelial planar cell polarity and for cell proliferation. During oocyte development, required for the posterior translocation of oocyte specification factors and for the posterior establishment of the microtubule organizing center within the presumptive oocyte. Phosphorylates l(2)gl which restricts l(2)gl activity to the oocyte posterior and regulates posterior enrichment of par-1, leading to establishment of correct oocyte polarity. Essential for apical localization of l(2)gl and par-6 in neuroblasts and for exclusion of mira from the apical cortex. Phosphorylates baz which is required for targeting of baz to the postsynaptic region where it is involved in actin organization, and for apical exclusion of baz which is necessary for establishment of the apical/lateral border in epithelial cells. Phosphorylates yrt which prevents its premature apical localization and is necessary for correct epithelial cell polarization. Required for the establishment of mitotic spindle orientation during symmetric division of epithelial cells and for apical exclusion of raps/Pins. Involved in symmetric adherens junction positioning during embryogenesis. Required for polarization of the spermatid cyst which is necessary for sperm differentiation. Required for stimulation of the Toll signaling pathway which activates Dif and dl and plays a role in innate immunity. Plays a role in memory enhancement. This chain is Atypical protein kinase C, found in Drosophila melanogaster (Fruit fly).